The primary structure comprises 363 residues: 3-isopropylmalate dehydrogenase (363 aa).

78–91 serves as a coordination point for NAD(+); it reads GPKWEHLPPDQQPE. Substrate contacts are provided by arginine 99, arginine 109, arginine 138, and aspartate 227. Positions 227, 251, and 255 each coordinate Mg(2+). 285–297 serves as a coordination point for NAD(+); the sequence is GSAPDITGKNIAN.

The protein belongs to the isocitrate and isopropylmalate dehydrogenases family. LeuB type 1 subfamily. As to quaternary structure, homodimer. Mg(2+) is required as a cofactor. The cofactor is Mn(2+).

It localises to the cytoplasm. It carries out the reaction (2R,3S)-3-isopropylmalate + NAD(+) = 4-methyl-2-oxopentanoate + CO2 + NADH. It participates in amino-acid biosynthesis; L-leucine biosynthesis; L-leucine from 3-methyl-2-oxobutanoate: step 3/4. Catalyzes the oxidation of 3-carboxy-2-hydroxy-4-methylpentanoate (3-isopropylmalate) to 3-carboxy-4-methyl-2-oxopentanoate. The product decarboxylates to 4-methyl-2 oxopentanoate. This is 3-isopropylmalate dehydrogenase from Shigella boydii serotype 4 (strain Sb227).